The primary structure comprises 232 residues: Putative N-acetylmannosamine-6-phosphate 2-epimerase (232 aa).

This sequence belongs to the NanE family.

It catalyses the reaction an N-acyl-D-glucosamine 6-phosphate = an N-acyl-D-mannosamine 6-phosphate. The protein operates within amino-sugar metabolism; N-acetylneuraminate degradation; D-fructose 6-phosphate from N-acetylneuraminate: step 3/5. Its function is as follows. Converts N-acetylmannosamine-6-phosphate (ManNAc-6-P) to N-acetylglucosamine-6-phosphate (GlcNAc-6-P). This Corynebacterium glutamicum (strain R) protein is Putative N-acetylmannosamine-6-phosphate 2-epimerase.